The sequence spans 174 residues: Large ribosomal subunit protein uL10 (174 aa).

Belongs to the universal ribosomal protein uL10 family. As to quaternary structure, part of the ribosomal stalk of the 50S ribosomal subunit. The N-terminus interacts with L11 and the large rRNA to form the base of the stalk. The C-terminus forms an elongated spine to which L12 dimers bind in a sequential fashion forming a multimeric L10(L12)X complex.

Functionally, forms part of the ribosomal stalk, playing a central role in the interaction of the ribosome with GTP-bound translation factors. The polypeptide is Large ribosomal subunit protein uL10 (Nitrosospira multiformis (strain ATCC 25196 / NCIMB 11849 / C 71)).